The primary structure comprises 366 residues: Chorismate synthase (366 aa).

Positions 47 and 53 each coordinate NADP(+). FMN is bound by residues arginine 124–serine 126, glycine 286, lysine 301–threonine 305, and arginine 327.

The protein belongs to the chorismate synthase family. In terms of assembly, homotetramer. Requires FMNH2 as cofactor.

It carries out the reaction 5-O-(1-carboxyvinyl)-3-phosphoshikimate = chorismate + phosphate. Its pathway is metabolic intermediate biosynthesis; chorismate biosynthesis; chorismate from D-erythrose 4-phosphate and phosphoenolpyruvate: step 7/7. Catalyzes the anti-1,4-elimination of the C-3 phosphate and the C-6 proR hydrogen from 5-enolpyruvylshikimate-3-phosphate (EPSP) to yield chorismate, which is the branch point compound that serves as the starting substrate for the three terminal pathways of aromatic amino acid biosynthesis. This reaction introduces a second double bond into the aromatic ring system. The protein is Chorismate synthase of Microcystis aeruginosa (strain NIES-843 / IAM M-2473).